Consider the following 352-residue polypeptide: GTPase Obg (352 aa).

The Obg domain maps to 1–159 (MHFLDQAKIY…MWVWLRLKLL (159 aa)). The OBG-type G domain maps to 160–327 (ADVGLLGLPN…LLDAVLGYLP (168 aa)). GTP-binding positions include 166–173 (GLPNAGKS), 191–195 (FTTLV), 212–215 (DIPG), 279–282 (NKLD), and 308–310 (SGA). Positions 173 and 193 each coordinate Mg(2+). A disordered region spans residues 329-352 (STSTETKGSEVEEVDEEGGEWSPI). Residues 339-352 (VEEVDEEGGEWSPI) show a composition bias toward acidic residues.

Belongs to the TRAFAC class OBG-HflX-like GTPase superfamily. OBG GTPase family. In terms of assembly, monomer. Mg(2+) serves as cofactor.

The protein localises to the cytoplasm. In terms of biological role, an essential GTPase which binds GTP, GDP and possibly (p)ppGpp with moderate affinity, with high nucleotide exchange rates and a fairly low GTP hydrolysis rate. Plays a role in control of the cell cycle, stress response, ribosome biogenesis and in those bacteria that undergo differentiation, in morphogenesis control. This chain is GTPase Obg, found in Erythrobacter litoralis (strain HTCC2594).